Consider the following 179-residue polypeptide: MGILFTRIWRLFNHQEHKVIIVGLDNAGKTTILYQFSMNEVVHTSPTIGSNVEEIVINNTRFLMWDIGGQESLRSSWNTYYTNTEFVIVVVDSTDRERISVTREELYKMLAHEDLRKAGLLIFANKQDVKGCMTVAEISQFLKLTSIKDHQWHIQACCALTGEGLCQGLEWMMSRLKIR.

G2 carries N-myristoyl glycine lipidation. GTP-binding positions include 23 to 30 (GLDNAGKT), 66 to 70 (DIGGQ), 125 to 128 (NKQD), and A159.

It belongs to the small GTPase superfamily. Arf family.

Lacks ADP-ribosylation enhancing activity. This chain is ADP-ribosylation factor-like protein 5A (ARL5A), found in Bos taurus (Bovine).